The chain runs to 744 residues: Junctophilin-3 (744 aa).

The Cytoplasmic segment spans residues 1-723; that stretch reads MSSGGRFNFD…LKSSTGSAPI (723 aa). 6 MORN repeats span residues 15 to 37, 39 to 60, 61 to 82, 83 to 105, 107 to 129, and 130 to 152; these read YCGGWEDGKAHGHGVCTGPKGQG, YTGSWSHGFEVLGVYTWPSGNT, YQGTWAQGKRHGIGLESKGKWV, YKGEWTHGFKGRYGVRECTGNGA, YEGTWSNGLQDGYGTETYSDGGT, and YQGQWVGGMRQGYGVRQSVPYGM. The segment at 230–252 is disordered; sequence SKSSLASQRSKQSSFRSEAGMST. Over residues 231 to 244 the composition is skewed to low complexity; it reads KSSLASQRSKQSSF. 2 MORN repeats span residues 288–310 and 311–333; these read YVGEWKNDKRSGFGVSQRSDGLK and YEGEWVSNRRHGYGCMTFPDGTK. Ser-440 bears the Phosphoserine mark. Thr-451 is modified (phosphothreonine). 2 disordered regions span residues 451–603 and 624–677; these read TPLQ…LLEP and CPQD…ESLR. At Ser-457 the chain carries Phosphoserine. Thr-471 carries the phosphothreonine modification. A phosphoserine mark is found at Ser-475 and Ser-506. Phosphoserine is present on residues Ser-699 and Ser-706. The helical; Anchor for type IV membrane protein transmembrane segment at 724-744 threads the bilayer; the sequence is LVVMVILLNIGVAILFINFFI.

It belongs to the junctophilin family. Specifically expressed in brain. Highest levels in the olfactory tubercle, caudate putamen, nucleus accumbens, hippocampal formation, piriform cortex and cerebellar cortex. Expressed in disctete neurons sites. In hippocampal formation, expressed in dendrites of hippocampal pyramidal and denate granule cells. In cerebellum, it is highly expressed in Purkinge cells, while it is weakly expressed in granular cells.

The protein localises to the cell membrane. The protein resides in the endoplasmic reticulum membrane. Its function is as follows. Junctophilins contribute to the formation of junctional membrane complexes (JMCs) which link the plasma membrane with the endoplasmic or sarcoplasmic reticulum in excitable cells. Provides a structural foundation for functional cross-talk between the cell surface and intracellular calcium release channels. JPH3 is brain-specific and appears to have an active role in certain neurons involved in motor coordination and memory. The sequence is that of Junctophilin-3 (Jph3) from Mus musculus (Mouse).